Consider the following 480-residue polypeptide: Iroquois-class homeodomain protein IRX-1 (480 aa).

The homeobox; TALE-type DNA-binding region spans 125-188 (YGDPGRPKNA…ANARRRLKKE (64 aa)). 3 disordered regions span residues 190–268 (KVTW…QGSP), 280–354 (SPLG…PLQH), and 401–480 (PHGP…LPSA). Positions 210-228 (TEGDPEKAEDDEEIDLESI) are enriched in acidic residues. The span at 229 to 239 (DIDKIDEHDGD) shows a compositional bias: basic and acidic residues. At Ser241 the chain carries Phosphoserine. Composition is skewed to low complexity over residues 252–262 (PHAPAAPSALA) and 340–351 (HPGAHGPSAGAP). Pro residues predominate over residues 404-417 (PHLPAPPPPQPPVA).

It belongs to the TALE/IRO homeobox family.

It is found in the nucleus. The sequence is that of Iroquois-class homeodomain protein IRX-1 (IRX1) from Homo sapiens (Human).